Consider the following 236-residue polypeptide: Uridylate kinase (236 aa).

Residue 10–13 (KLSG) coordinates ATP. Residue glycine 52 participates in UMP binding. Residues glycine 53 and arginine 57 each contribute to the ATP site. UMP is bound by residues aspartate 72 and 133-140 (TGNPFFTT). ATP is bound by residues threonine 160, tyrosine 166, and aspartate 169.

It belongs to the UMP kinase family. As to quaternary structure, homohexamer.

It localises to the cytoplasm. It catalyses the reaction UMP + ATP = UDP + ADP. Its pathway is pyrimidine metabolism; CTP biosynthesis via de novo pathway; UDP from UMP (UMPK route): step 1/1. Its activity is regulated as follows. Inhibited by UTP. In terms of biological role, catalyzes the reversible phosphorylation of UMP to UDP. The sequence is that of Uridylate kinase from Phocaeicola vulgatus (strain ATCC 8482 / DSM 1447 / JCM 5826 / CCUG 4940 / NBRC 14291 / NCTC 11154) (Bacteroides vulgatus).